A 215-amino-acid polypeptide reads, in one-letter code: Adenylate kinase (215 aa).

10–15 (GAGKGT) serves as a coordination point for ATP. The segment at 30-59 (STGDMLREAVAAGTELGKKVKEIIEKGLLV) is NMP. Residues Thr31, Arg36, 57 to 59 (LLV), 85 to 88 (GFPR), and Gln92 contribute to the AMP site. The tract at residues 126 to 163 (SRRVCPSCGKVYNLLTIKPKNDMLCDDCNIGLIQREDD) is LID. Arg127 is a binding site for ATP. Zn(2+)-binding residues include Cys130 and Cys133. Residue 136-137 (VY) participates in ATP binding. 2 residues coordinate Zn(2+): Cys150 and Cys153. The AMP site is built by Arg160 and Arg171. Position 199 (Leu199) interacts with ATP.

This sequence belongs to the adenylate kinase family. In terms of assembly, monomer.

Its subcellular location is the cytoplasm. The enzyme catalyses AMP + ATP = 2 ADP. It functions in the pathway purine metabolism; AMP biosynthesis via salvage pathway; AMP from ADP: step 1/1. Catalyzes the reversible transfer of the terminal phosphate group between ATP and AMP. Plays an important role in cellular energy homeostasis and in adenine nucleotide metabolism. This chain is Adenylate kinase, found in Kosmotoga olearia (strain ATCC BAA-1733 / DSM 21960 / TBF 19.5.1).